The chain runs to 1028 residues: Sodium/potassium-transporting ATPase subunit alpha-4 (1028 aa).

The interval 1–36 (MEPGKETAATSEQKPRPTLRASNTNRQPKVKRRKKD) is disordered. Residues 1–92 (MEPGKETAAT…NVLTPPPTTP (92 aa)) lie on the Cytoplasmic side of the membrane. The interval 87-89 (PPP) is interaction with phosphoinositide-3 kinase. Residues 93–113 (EWIKFCKQLFGGFSLLLWTGS) traverse the membrane as a helical segment. At 114–137 (LLCFLAYGIHVSYYQENANKDNLY) the chain is on the extracellular side. Residues 138-158 (LGIVLSAVVIITGCFSYYQEA) form a helical membrane-spanning segment. The Cytoplasmic portion of the chain corresponds to 159–294 (KSSKIMESFK…MGKTPIATEI (136 aa)). Residues 295–314 (EHFIHIITAVAVFLGVTFFF) traverse the membrane as a helical segment. Over 315 to 326 (LSLILGYTWLDA) the chain is Extracellular. Residues 327–344 (VIFLIGIIVANVPEGLLA) form a helical membrane-spanning segment. Over 345-777 (TVTVCLTLTA…EEGRLIFDNL (433 aa)) the chain is Cytoplasmic. The 4-aspartylphosphate intermediate role is filled by Asp382. Asp722 and Asp726 together coordinate Mg(2+). Residues 778-797 (KKSIAYTLTSNIPEITPFLL) traverse the membrane as a helical segment. The Extracellular portion of the chain corresponds to 798–807 (FIVLSIPLPL). Residues 808–828 (GTITILCIDLGTDMVPAISLA) form a helical membrane-spanning segment. Over 829 to 848 (YETPESDIMKRLPRNPKTDN) the chain is Cytoplasmic. A helical transmembrane segment spans residues 849–871 (LVNDRLIGMAYGQIGMIQALAGF). Residues 872–923 (FTYFVILAENGFKPLDLLGIRLYWDDTNLNDLEDTYGQQWTYEQRKVVEFTC) are Extracellular-facing. Residues 924 to 943 (QTAFFISIVIVQWADLIICK) traverse the membrane as a helical segment. Over 944-956 (TRRNSLFKQGMKN) the chain is Cytoplasmic. Position 948 is a phosphoserine; by PKA (Ser948). A helical membrane pass occupies residues 957–975 (KVLIFGLLEETILAACLSY). At 976–990 (IPGMDVALRMYPLKI) the chain is on the extracellular side. The helical transmembrane segment at 991 to 1011 (NWWFCALPYSVLIFIYDEVRK) threads the bilayer. The Cytoplasmic portion of the chain corresponds to 1012-1028 (LIIRRRPGGWLEKETYY).

The protein belongs to the cation transport ATPase (P-type) (TC 3.A.3) family. Type IIC subfamily. As to quaternary structure, the sodium/potassium-transporting ATPase is composed of a catalytic alpha subunit, an auxiliary non-catalytic beta subunit and an additional regulatory subunit.

It is found in the cell membrane. It catalyses the reaction K(+)(out) + Na(+)(in) + ATP + H2O = K(+)(in) + Na(+)(out) + ADP + phosphate + H(+). Its activity is regulated as follows. Specifically inhibited by an endogenous cardiac glycoside, ouabain. This is the catalytic component of the active enzyme, which catalyzes the hydrolysis of ATP coupled with the exchange of sodium and potassium ions across the plasma membrane. This action creates the electrochemical gradient of sodium and potassium ions, providing the energy for active transport of various nutrients. Plays a role in sperm motility. The chain is Sodium/potassium-transporting ATPase subunit alpha-4 (Atp1a4) from Rattus norvegicus (Rat).